A 213-amino-acid polypeptide reads, in one-letter code: Nicotinamidase (213 aa).

Asp-10 functions as the Proton acceptor in the catalytic mechanism. Residues Asp-52, His-54, and His-86 each contribute to the Zn(2+) site. Lys-111 is a catalytic residue. Cys-156 (nucleophile) is an active-site residue.

The protein belongs to the isochorismatase family.

The catalysed reaction is nicotinamide + H2O = nicotinate + NH4(+). It carries out the reaction pyrazinamide + H2O = pyrazine-2-carboxylate + NH4(+). The protein operates within cofactor biosynthesis; nicotinate biosynthesis; nicotinate from nicotinamide: step 1/1. Catalyzes the deamidation of nicotinamide (NAM) into nicotinate. Likely functions in the cyclical salvage pathway for production of NAD from nicotinamide. Functionally, is also able to hydrolyze the first-line antituberculous drug pyrazinamide (PZA) into pyrazinoic acid in vitro, but this reaction is not considered to be physiologically relevant. The chain is Nicotinamidase from Escherichia coli (strain K12).